Consider the following 130-residue polypeptide: uncharacterized protein (130 aa).

The N-terminal stretch at 1 to 19 (MLAPLFLCCLRNLFRKLIS) is a signal peptide.

The protein resides in the secreted. This is an uncharacterized protein from Homo sapiens (Human).